The sequence spans 347 residues: S-adenosylmethionine:tRNA ribosyltransferase-isomerase (347 aa).

The protein belongs to the QueA family. In terms of assembly, monomer.

It localises to the cytoplasm. The enzyme catalyses 7-aminomethyl-7-carbaguanosine(34) in tRNA + S-adenosyl-L-methionine = epoxyqueuosine(34) in tRNA + adenine + L-methionine + 2 H(+). The protein operates within tRNA modification; tRNA-queuosine biosynthesis. Functionally, transfers and isomerizes the ribose moiety from AdoMet to the 7-aminomethyl group of 7-deazaguanine (preQ1-tRNA) to give epoxyqueuosine (oQ-tRNA). The chain is S-adenosylmethionine:tRNA ribosyltransferase-isomerase from Streptococcus thermophilus (strain ATCC BAA-491 / LMD-9).